Consider the following 132-residue polypeptide: uncharacterized protein (132 aa).

The interval 1-68 is disordered; the sequence is MCSAGELLRG…HTGEPVGDDY (68 aa). Residues 100 to 120 traverse the membrane as a helical segment; that stretch reads VIVIFFWVMLWFLGLQALGLV.

It belongs to the FAM241 family.

The protein resides in the membrane. This is an uncharacterized protein from Homo sapiens (Human).